Reading from the N-terminus, the 541-residue chain is Pseudokinase FAM20A (541 aa).

The signal sequence occupies residues 1 to 33; it reads MPGLRRDRLLTLLLLGALLSADLYFHLWPQVQR. The disordered stretch occupies residues 38 to 90; the sequence is RERPRGCPCTGRASSLARDSAAAASDPGTIVHNFSRTEPRTEPAGGSHSGSSS. Low complexity predominate over residues 49–63; it reads RASSLARDSAAAASD. Residues Asn-70, Asn-145, and Asn-287 are each glycosylated (N-linked (GlcNAc...) asparagine). 4 disulfide bridges follow: Cys-314/Cys-330, Cys-319/Cys-323, Cys-378/Cys-452, and Cys-453/Cys-512. The N-linked (GlcNAc...) asparagine glycan is linked to Asn-388. Asn-538 carries N-linked (GlcNAc...) asparagine glycosylation.

It belongs to the FAM20 family. In terms of assembly, interacts with FAM20C; probably forming a heterotetramer of 2 subunits of FAM20A and 2 subunits of FAM20C. N-glycosylated. Highly expressed in lung and liver. Intermediate levels in thymus and ovary.

The protein resides in the secreted. Its subcellular location is the golgi apparatus. It is found in the endoplasmic reticulum. Pseudokinase that acts as an allosteric activator of the Golgi serine/threonine protein kinase FAM20C and is involved in biomineralization of teeth. Forms a complex with FAM20C and increases the ability of FAM20C to phosphorylate the proteins that form the 'matrix' that guides the deposition of the enamel minerals. This is Pseudokinase FAM20A from Homo sapiens (Human).